The chain runs to 633 residues: Threonine--tRNA ligase (633 aa).

Residues 1-61 form the TGS domain; the sequence is MINISFPDGS…DNDCRLRILT (61 aa). The tract at residues 242–533 is catalytic; the sequence is DHRKLGKELD…LIEEYAGRFP (292 aa). Positions 333, 384, and 510 each coordinate Zn(2+).

This sequence belongs to the class-II aminoacyl-tRNA synthetase family. Homodimer. Requires Zn(2+) as cofactor.

It is found in the cytoplasm. The catalysed reaction is tRNA(Thr) + L-threonine + ATP = L-threonyl-tRNA(Thr) + AMP + diphosphate + H(+). Catalyzes the attachment of threonine to tRNA(Thr) in a two-step reaction: L-threonine is first activated by ATP to form Thr-AMP and then transferred to the acceptor end of tRNA(Thr). Also edits incorrectly charged L-seryl-tRNA(Thr). The chain is Threonine--tRNA ligase from Rickettsia bellii (strain OSU 85-389).